The primary structure comprises 102 residues: Small ribosomal subunit protein eS24 (102 aa).

It belongs to the eukaryotic ribosomal protein eS24 family.

This is Small ribosomal subunit protein eS24 from Methanococcoides burtonii (strain DSM 6242 / NBRC 107633 / OCM 468 / ACE-M).